The primary structure comprises 369 residues: Ferredoxin--NADP reductase 2 (369 aa).

Residues 1–23 are disordered; the sequence is MDLSIPNPVADTTKQVDGGSPAG. 7 residues coordinate FAD: Asp58, Gln66, Tyr71, Val111, Phe146, Asp311, and Thr352.

Belongs to the ferredoxin--NADP reductase type 2 family. As to quaternary structure, homodimer. FAD is required as a cofactor.

The catalysed reaction is 2 reduced [2Fe-2S]-[ferredoxin] + NADP(+) + H(+) = 2 oxidized [2Fe-2S]-[ferredoxin] + NADPH. The chain is Ferredoxin--NADP reductase 2 from Cupriavidus necator (strain ATCC 17699 / DSM 428 / KCTC 22496 / NCIMB 10442 / H16 / Stanier 337) (Ralstonia eutropha).